The following is a 426-amino-acid chain: Squamosa promoter-binding-like protein 10 (426 aa).

The SBP-type zinc finger occupies 178 to 255; it reads PPRCQAEGCK…AEHNRRRRKP (78 aa). Zn(2+) contacts are provided by cysteine 181, cysteine 186, cysteine 203, histidine 206, cysteine 222, cysteine 225, histidine 229, and cysteine 241. The Bipartite nuclear localization signal motif lies at 238–254; sequence KRSCRKRLAEHNRRRRK. Low complexity-rich tracts occupy residues 268–287 and 401–417; these read DAAA…AATS and SDQN…NNNN. 2 disordered regions span residues 268-290 and 392-426; these read DAAA…SYTG and PSTA…VDFM.

Expressed in stems, leaf sheaths, and young panicles.

It localises to the nucleus. Its function is as follows. Trans-acting factor that binds specifically to the consensus nucleotide sequence 5'-TNCGTACAA-3'. The protein is Squamosa promoter-binding-like protein 10 (SPL10) of Oryza sativa subsp. indica (Rice).